The chain runs to 166 residues: Putative peptidyl-prolyl cis-trans isomerase dodo (166 aa).

The WW domain maps to 5–39 (EQLPDGWEKRTSRSTGMSYYLNMYTKESQWDQPTE). Residues 32-53 (SQWDQPTEPAKKAGGGSAGGGD) form a disordered region. Gly residues predominate over residues 44–53 (AGGGSAGGGD). Residues 55–166 (PDEVHCLHLL…SGLHIILRKA (112 aa)) form the PpiC domain.

It carries out the reaction [protein]-peptidylproline (omega=180) = [protein]-peptidylproline (omega=0). In Drosophila melanogaster (Fruit fly), this protein is Putative peptidyl-prolyl cis-trans isomerase dodo (dod).